Reading from the N-terminus, the 249-residue chain is Inhibitor of growth protein 4 (249 aa).

Positions 25 to 118 (FQLMRDLDQR…ADLKEKQIES (94 aa)) form a coiled coil. N6-acetyllysine occurs at positions 112, 127, and 129. The tract at residues 115–163 (QIESSDYDSSSSKGKKKGRTQKEKKAARARSKGKNSDEEAPKAAQKKLK) is disordered. The short motif at 127 to 148 (KGKKKGRTQKEKKAARARSKGK) is the Bipartite nuclear localization signal element. Residue Arg-133 is modified to Citrulline. 3 positions are modified to N6-acetyllysine: Lys-146, Lys-148, and Lys-156. Position 166 is a citrulline (Arg-166). The PHD-type zinc finger occupies 196 to 245 (PTYCLCHQVSYGEMIGCDNPDCSIEWFHFACVGLTTKPRGKWFCPRCSQE). Residues Cys-199, Cys-201, Cys-212, Cys-217, His-223, Cys-226, Cys-239, and Cys-242 each contribute to the Zn(2+) site.

The protein belongs to the ING family. In terms of assembly, homodimer. Component of the HBO1 complex composed of KAT7/HBO1, MEAF6, ING4 or ING5, and one scaffold subunit: complexes containing BRPF scaffold (BRPF1, BRD1/BRPF2 or BRPF3) direct KAT7/HBO1 specificity towards H3K14ac, while complexes containing JADE scaffold (JADE1, JADE2 and JADE3) mediate acetylation of histone H4. Interacts with H3K4me3 and to a lesser extent with H3K4me2, the interaction augments KAT7/HBO1 acetylation activity on H3 tails. Interacts with EP300, RELA and TP53; these interactions may be indirect. Interacts with EGLN1. As to quaternary structure, interacts with BCL2A1. Post-translationally, citrullination by PADI4 within the nuclear localization signal disrupts the interaction with p53 and increases susceptibility to degradation. Isoform 2, isoform 3, isoform 4 and isoform 5 are expressed in the mammary gland, ovary, spleen and muscle. As to expression, expressed in the mammary gland, ovary, spleen and muscle.

Its subcellular location is the nucleus. Component of HBO1 complexes, which specifically mediate acetylation of histone H3 at 'Lys-14' (H3K14ac), and have reduced activity toward histone H4. Through chromatin acetylation it may function in DNA replication. May inhibit tumor progression by modulating the transcriptional output of signaling pathways which regulate cell proliferation. Can suppress brain tumor angiogenesis through transcriptional repression of RELA/NFKB3 target genes when complexed with RELA. May also specifically suppress loss of contact inhibition elicited by activated oncogenes such as MYC. Represses hypoxia inducible factor's (HIF) activity by interacting with HIF prolyl hydroxylase 2 (EGLN1). Can enhance apoptosis induced by serum starvation in mammary epithelial cell line HC11. The protein is Inhibitor of growth protein 4 (Ing4) of Mus musculus (Mouse).